The chain runs to 604 residues: Cell division cycle protein CDT1 (604 aa).

The protein belongs to the Cdt1 family. Associates with the MCM2-7 complex. Interacts with MCM2, ORC1, ORC2 and ORC6.

It localises to the cytoplasm. The protein resides in the nucleus. In terms of biological role, DNA replication licensing factor, required for pre-replication complex assembly. Faithful duplication of the genetic material requires 'once per cell cycle' DNA replication initiation and elongation. Central to this control is the tightly regulated formation of prereplicative complexes (preRCs) at future origins of DNA replication. Required for the recruitment of the MCM2-7 helicase complex to the replication origins. The sequence is that of Cell division cycle protein CDT1 (TAH11) from Saccharomyces cerevisiae (strain ATCC 204508 / S288c) (Baker's yeast).